A 382-amino-acid chain; its full sequence is Mannitol-1-phosphate 5-dehydrogenase (382 aa).

An NAD(+)-binding site is contributed by 3 to 14 (VLHFGAGNIGRG).

Belongs to the mannitol dehydrogenase family.

The catalysed reaction is D-mannitol 1-phosphate + NAD(+) = beta-D-fructose 6-phosphate + NADH + H(+). This is Mannitol-1-phosphate 5-dehydrogenase from Sodalis glossinidius (strain morsitans).